We begin with the raw amino-acid sequence, 320 residues long: MIHYGNCNKICEKTVMNQRTIKTAIAVTGTGLHSGQPVDLEFHPQPIDTGIVFERSDITGSTPIPASAFLVQDTMMSSNLVFGGTRVGTVEHLLSAIAGLGVDNLLIRVSASEIPIMDGSAAPFVGLLLQAGFCEQDASKKFIRIVRTVRVKVDDKWAELRPYNGFELNFEIDFDHPAIDKNFQHAQLQFSTQNFIERLSSARTFGFLRDIEAMRQNNLALGGSMDNAIVIDESNILNEEGLRFNDEFVRHKILDALGDLYLIGYPILGRFNAYKSGHALNNLLVREILSDHNNFEIVTFDDNVTCPIEYLPLNGITVEG.

The Zn(2+) site is built by H92, H251, and D255. The active-site Proton donor is the H278.

It belongs to the LpxC family. Zn(2+) is required as a cofactor.

The enzyme catalyses a UDP-3-O-[(3R)-3-hydroxyacyl]-N-acetyl-alpha-D-glucosamine + H2O = a UDP-3-O-[(3R)-3-hydroxyacyl]-alpha-D-glucosamine + acetate. Its pathway is glycolipid biosynthesis; lipid IV(A) biosynthesis; lipid IV(A) from (3R)-3-hydroxytetradecanoyl-[acyl-carrier-protein] and UDP-N-acetyl-alpha-D-glucosamine: step 2/6. Catalyzes the hydrolysis of UDP-3-O-myristoyl-N-acetylglucosamine to form UDP-3-O-myristoylglucosamine and acetate, the committed step in lipid A biosynthesis. This Psychrobacter cryohalolentis (strain ATCC BAA-1226 / DSM 17306 / VKM B-2378 / K5) protein is UDP-3-O-acyl-N-acetylglucosamine deacetylase.